The sequence spans 31 residues: U13-ctenitoxin-Pn1b (31 aa).

3 cysteine pairs are disulfide-bonded: Cys3–Cys17, Cys10–Cys21, and Cys16–Cys30.

As to expression, expressed by the venom gland.

The protein resides in the secreted. Acts as a neurotoxin. This Phoneutria nigriventer (Brazilian armed spider) protein is U13-ctenitoxin-Pn1b.